Consider the following 582-residue polypeptide: DnaJ protein ERDJ3A (582 aa).

Residues 1-25 (MGIPVRSLLVASIVLSSIALHVAAA) form the signal peptide. In terms of domain architecture, J spans 29–93 (DPYKVLGVDK…EKRKNYDLYG (65 aa)). Asn-61 carries an N-linked (GlcNAc...) asparagine glycan. A disordered region spans residues 178–201 (GGSQHTGSAGKARRGTKSSGHDSS). The stretch at 407-437 (VKDLRSGIKELKNLLENFEKKNKKLASNQAK) forms a coiled coil.

In terms of assembly, interacts with BIP5.

It is found in the endoplasmic reticulum. The protein localises to the vacuole. Its function is as follows. May play a role in protein folding in the endoplasmic reticulum. The protein is DnaJ protein ERDJ3A of Oryza sativa subsp. japonica (Rice).